A 209-amino-acid polypeptide reads, in one-letter code: J domain-containing protein spf31 (209 aa).

Residues 31–96 (NAYDVLDILP…KIRESLDSAY (66 aa)) form the J domain. 2 disordered regions span residues 149-175 (ANQQREQARQDEIARERKRRVESEKVW) and 187-209 (QDFLHKTKKNNLKKKNKKPRVLG). Over residues 154–175 (EQARQDEIARERKRRVESEKVW) the composition is skewed to basic and acidic residues. The segment covering 192–209 (KTKKNNLKKKNKKPRVLG) has biased composition (basic residues).

This chain is J domain-containing protein spf31 (spf31), found in Schizosaccharomyces pombe (strain 972 / ATCC 24843) (Fission yeast).